Here is a 455-residue protein sequence, read N- to C-terminus: MTRLFGTDGVRGVANVNLTAEQALSLASAAVELLGAPGRSAGPAQRPRPLVVVGRDTRPSGEFLEAAVVAGLAASGADVARIGVAPTPAVAHAVAASDATFGVMLSASHNPMPDNGIKVFAAGGLKLPDEVEDAIERRMAQPPGPRPVGADVGRIRDEPGLLDRYADHLLAALPVRLDNLRVVVDCAQGAASALAPRVLRAAGADVIALHADGDGAAINDGSGVTHLDSLRAAVVDQAADVGIAHDGDADRCLAVDAAGEIVDGDQILAICALALAERGELADDTVVVTVMSNLGFHHAMREAGITVVTTPVGDRYVVEAMRAGGYVLGGEQSGHVVFLDHATTGDGLLTALRLLGRVAETGQPLGELAKAMTRLPQVLVNVRGVDRTRVDTSPQLRAAVAAAEAELGDGGRVLLRPSGTEPLVRVMVEAETDAVARDTAQRLAAVVRAALPAPR.

Ser108 (phosphoserine intermediate) is an active-site residue. Positions 108, 246, 248, and 250 each coordinate Mg(2+). Phosphoserine is present on Ser108.

Belongs to the phosphohexose mutase family. Mg(2+) is required as a cofactor. In terms of processing, activated by phosphorylation.

It carries out the reaction alpha-D-glucosamine 1-phosphate = D-glucosamine 6-phosphate. Functionally, catalyzes the conversion of glucosamine-6-phosphate to glucosamine-1-phosphate. This is Phosphoglucosamine mutase from Frankia alni (strain DSM 45986 / CECT 9034 / ACN14a).